The sequence spans 139 residues: HTH-type transcriptional regulator MntR (139 aa).

Residues 1-63 enclose the HTH dtxR-type domain; that stretch reads MPTPSMEDHI…YEKYRGLTLT (63 aa). Residues Asp-8, Glu-11, His-77, Glu-99, Glu-102, and His-103 each coordinate Mn(2+).

It belongs to the DtxR/MntR family. In terms of assembly, homodimer.

The protein resides in the cytoplasm. With respect to regulation, DNA binding is strongly activated by Mn(2+). Central regulator of manganese homeostasis. This Lysinibacillus sphaericus (strain C3-41) protein is HTH-type transcriptional regulator MntR.